The following is a 362-amino-acid chain: Phosphoserine aminotransferase (362 aa).

Positions 9 and 42 each coordinate L-glutamate. Residues 76 to 77 (GR), Trp-102, Thr-153, Asp-174, and Gln-197 each bind pyridoxal 5'-phosphate. Lys-198 carries the N6-(pyridoxal phosphate)lysine modification. 239–240 (NT) lines the pyridoxal 5'-phosphate pocket.

Belongs to the class-V pyridoxal-phosphate-dependent aminotransferase family. SerC subfamily. Homodimer. It depends on pyridoxal 5'-phosphate as a cofactor.

It localises to the cytoplasm. It catalyses the reaction O-phospho-L-serine + 2-oxoglutarate = 3-phosphooxypyruvate + L-glutamate. It carries out the reaction 4-(phosphooxy)-L-threonine + 2-oxoglutarate = (R)-3-hydroxy-2-oxo-4-phosphooxybutanoate + L-glutamate. It functions in the pathway amino-acid biosynthesis; L-serine biosynthesis; L-serine from 3-phospho-D-glycerate: step 2/3. The protein operates within cofactor biosynthesis; pyridoxine 5'-phosphate biosynthesis; pyridoxine 5'-phosphate from D-erythrose 4-phosphate: step 3/5. Catalyzes the reversible conversion of 3-phosphohydroxypyruvate to phosphoserine and of 3-hydroxy-2-oxo-4-phosphonooxybutanoate to phosphohydroxythreonine. The chain is Phosphoserine aminotransferase from Citrobacter koseri (strain ATCC BAA-895 / CDC 4225-83 / SGSC4696).